Reading from the N-terminus, the 424-residue chain is ATP-citrate synthase alpha chain protein 3 (424 aa).

Residues Asn343, Thr345, and Arg376 each contribute to the citrate site.

This sequence belongs to the succinate/malate CoA ligase beta subunit family. As to quaternary structure, heterooctamer of 4 alpha and 4 beta chains.

It localises to the cytoplasm. The protein resides in the cytosol. The enzyme catalyses oxaloacetate + acetyl-CoA + ADP + phosphate = citrate + ATP + CoA. Its function is as follows. ATP citrate-lyase is the primary enzyme responsible for the synthesis of cytosolic acetyl-CoA, used for the elongation of fatty acids and biosynthesis of isoprenoids, flavonoids and malonated derivatives. May supply substrate to the cytosolic acetyl-CoA carboxylase, which generates the malonyl-CoA used for the synthesis of a multitude of compounds, including very long chain fatty acids and flavonoids. Required for normal growth and development and elongation of C18 fatty acids to C20 to C24 fatty acids in seeds. In contrast to all known animal ACL enzymes having a homomeric structure, plant ACLs are composed of alpha and beta chains. The polypeptide is ATP-citrate synthase alpha chain protein 3 (ACLA-3) (Arabidopsis thaliana (Mouse-ear cress)).